Consider the following 83-residue polypeptide: Neurotoxin LmNaTx3 (83 aa).

Residues Met-1–Ser-21 form the signal peptide. The LCN-type CS-alpha/beta domain maps to Lys-22–Cys-83. 4 disulfides stabilise this stretch: Cys-32/Cys-83, Cys-36/Cys-59, Cys-45/Cys-64, and Cys-49/Cys-66.

It belongs to the long (4 C-C) scorpion toxin superfamily. Sodium channel inhibitor family. Alpha subfamily. In terms of tissue distribution, expressed by the venom gland.

Its subcellular location is the secreted. Binds voltage-independently at site-3 of voltage-gated sodium channels (Nav) and inhibits the inactivation of the activated channels, thereby blocking neuronal transmission. This is Neurotoxin LmNaTx3 from Lychas mucronatus (Chinese swimming scorpion).